Consider the following 1802-residue polypeptide: Protein TIC 214 (1802 aa).

6 consecutive transmembrane segments (helical) span residues Ile-19–Gly-39, Phe-68–Leu-88, Pro-91–His-111, Val-133–Leu-153, Val-176–Ile-196, and Ile-227–Ile-247.

Belongs to the TIC214 family. Part of the Tic complex.

It localises to the plastid. The protein localises to the chloroplast inner membrane. Its function is as follows. Involved in protein precursor import into chloroplasts. May be part of an intermediate translocation complex acting as a protein-conducting channel at the inner envelope. This is Protein TIC 214 from Nasturtium officinale (Watercress).